Reading from the N-terminus, the 269-residue chain is Ribosomal RNA large subunit methyltransferase E (269 aa).

5 residues coordinate S-adenosyl-L-methionine: glycine 48, tryptophan 50, aspartate 68, aspartate 86, and aspartate 111. Catalysis depends on lysine 151, which acts as the Proton acceptor. In terms of domain architecture, TRAM spans 198–256 (PVAAGDRIEVTVEERGDEGDGIAYVEGYSIFVSDADVGETVTVEVVDAKPRFGFATRVD).

It belongs to the class I-like SAM-binding methyltransferase superfamily. RNA methyltransferase RlmE family.

It is found in the cytoplasm. It catalyses the reaction uridine(2552) in 23S rRNA + S-adenosyl-L-methionine = 2'-O-methyluridine(2552) in 23S rRNA + S-adenosyl-L-homocysteine + H(+). Functionally, specifically methylates the uridine in position 2552 of 23S rRNA at the 2'-O position of the ribose in the fully assembled 50S ribosomal subunit. This Halorubrum lacusprofundi (strain ATCC 49239 / DSM 5036 / JCM 8891 / ACAM 34) protein is Ribosomal RNA large subunit methyltransferase E.